The following is a 187-amino-acid chain: Thermosensitive gluconokinase (187 aa).

An ATP-binding site is contributed by 10–17; it reads GVSGSGKT.

This sequence belongs to the gluconokinase GntK/GntV family.

It catalyses the reaction D-gluconate + ATP = 6-phospho-D-gluconate + ADP + H(+). The protein operates within carbohydrate acid metabolism; L-idonate degradation. This chain is Thermosensitive gluconokinase (idnK), found in Escherichia coli (strain K12).